A 92-amino-acid chain; its full sequence is Large ribosomal subunit protein uL23c (92 aa).

The protein belongs to the universal ribosomal protein uL23 family. As to quaternary structure, part of the 50S ribosomal subunit.

It localises to the plastid. Its subcellular location is the chloroplast. Binds to 23S rRNA. In Nephroselmis olivacea (Green alga), this protein is Large ribosomal subunit protein uL23c (rpl23).